Here is a 434-residue protein sequence, read N- to C-terminus: Putative nuclease OPG089 (434 aa).

6 residues coordinate Mg(2+): Asp33, Asp74, Glu168, Asp170, Asp196, and Asp198.

Belongs to the XPG/RAD2 endonuclease family. FEN1 subfamily. Mg(2+) is required as a cofactor.

The protein localises to the virion. Its function is as follows. Putative nuclease that seems to be required for double-strand break repair, homologous recombination, and production of full-length viral genomic DNA. The sequence is that of Putative nuclease OPG089 (OPG089) from Homo sapiens (Human).